The sequence spans 309 residues: Low density lipoprotein receptor adapter protein 1-B (309 aa).

A PID domain is found at Leu-41–Gln-195. The disordered stretch occupies residues Asp-179–Ser-201. Positions Glu-189–Ser-201 are enriched in low complexity. Residues Leu-213 to Glu-217 carry the Clathrin box motif. Residues Trp-250–Leu-277 form an AP-2 complex binding region. A [DE]-X(1,2)-F-X-X-[FL]-X-X-X-R motif motif is present at residues Glu-258–Arg-267.

As to quaternary structure, interacts (via PID domain) with ldlr (via NPXY motif). Binds to soluble clathrin trimers and to the adapter protein complex 2 (AP-2, beta 2 subunit). Binds to phosphoinositides, which regulate clathrin bud assembly at the cell surface. Interacts with the VLDL receptor (vldlr). Interacts with the vitellogenin receptor. In terms of tissue distribution, expressed at high level during oogenesis and embryogenesis. Found at low level in the adult liver and spleen. Found at very low level in testis and heart. Not found in the oocyte vegetal cortex.

The protein localises to the cytoplasm. Adapter protein (clathrin-associated sorting protein (CLASP)) required for efficient endocytosis of the LDL receptor (LDLR). Also involved in the vitellogenin receptor mediated endocytosis of nutrients during oogenesis. The chain is Low density lipoprotein receptor adapter protein 1-B from Xenopus laevis (African clawed frog).